The sequence spans 255 residues: uncharacterized protein (255 aa).

It belongs to the methyltransferase superfamily.

This is an uncharacterized protein from Bacillus subtilis (strain 168).